The following is an 874-amino-acid chain: Breast cancer anti-estrogen resistance protein 1 (874 aa).

At M1 the chain carries N-acetylmethionine. Residues 3 to 65 (VPNVLAKALY…PGNRLKILVG (63 aa)) form the SH3 domain. Residues 71 to 177 (PVGPGPGPPA…LYQVPPGPGS (107 aa)) form a disordered region. Over residues 73–88 (GPGPGPPATPPQPQPS) the composition is skewed to pro residues. A substrate for kinases region spans residues 119-420 (YLVPTPSKTQ…DGVYAVPPPA (302 aa)). Residue Y132 is modified to Phosphotyrosine. Residues 139–155 (PQFQSPPAKQTSTFSKQ) are compositionally biased toward polar residues. Residue S143 is modified to Phosphoserine. Residues Y238 and Y253 each carry the phosphotyrosine modification. A Phosphothreonine modification is found at T273. S296 is modified (phosphoserine). Residues Y366, Y376, and Y414 each carry the phosphotyrosine modification. Over residues 374 to 388 (DLYDVPPGLRRPGPG) the composition is skewed to low complexity. 3 disordered regions span residues 374–394 (DLYDVPPGLRRPGPGTLYDVP), 409–450 (VDDG…SLEV), and 610–662 (RRTK…NSEG). A compositionally biased stretch (basic and acidic residues) spans 420 to 430 (AEREAPTDGKR). The segment covering 431 to 448 (LSASSTGSTRSSQSASSL) has biased composition (low complexity). Phosphoserine is present on residues S432, S441, and S643. The span at 621–659 (GSSSLHPNPTDKASSIQSRPLPSPPKFTSQDSPDGQYEN) shows a compositional bias: polar residues. Positions 639–647 (RPLPSPPKF) match the SH3-binding motif. Residues 750–800 (FYLEQCEANLTTLTDAVDAFFTAVATNQPPKIFVAHSKFVILSAHKLVFIG) are divergent helix-loop-helix motif.

This sequence belongs to the CAS family. In terms of assembly, forms complexes in vivo with PTK2/FAK1, adapter protein CRKL and LYN kinase. Can heterodimerize with NEDD9. Component of a complex comprised of SH2D3C, BCAR1/CAS, and CRK. Within the complex, interacts with SH2D3C (via C-terminus), and CRK. Part of a complex comprised of PTPRA, BCAR1, BCAR3 (via SH2 domain) and SRC; the formation of the complex is dependent on integrin mediated-tyrosine phosphorylation of PTPRA. Interacts with BCAR3 (via Ras-GEF domain); the interaction regulates adhesion-dependent serine phosphorylation. Interacts with SMAD2 and SMAD3. Interacts with NPHP1. Interacts with PTK2B/PYK2. Interacts (via C-terminus) with SH2D3C/CHAT isoform 2 (via C-terminus). Interacts with activated CSPG4. Interacts with BMX, INPPL1/SHIP2 and PEAK1. Part of a collagen stimulated complex involved in cell migration composed of CDC42, CRK, TNK2 and BCAR1/p130cas. Interacts with TNK2 via SH3 domains. Interacts (when tyrosine-phosphorylated) with tensin TNS1; the interaction is increased by phosphorylation of TNS1. Post-translationally, PTK2/FAK1 activation mediates phosphorylation at the YDYVHL motif; phosphorylation is most likely catalyzed by SRC family members. SRC-family kinases are recruited to the phosphorylated sites and can phosphorylate other tyrosine residues. Tyrosine phosphorylation is triggered by integrin mediated adhesion of cells to the extracellular matrix. Dephosphorylated by PTPN14 at Tyr-132. In terms of processing, phosphorylated by SRC kinase in a EDN1- and PTK2B-mediated manner; phosphorylation strengthens its interaction with BCAR3 as part of the PTK2B/BCAR1/BCAR3/RAP1 signaling pathway. In terms of tissue distribution, expressed in olfactory sensory neurons (at protein level). Expressed abundantly in the liver, lung, brain, and at lower levels in the heart (at protein level).

It is found in the cell junction. The protein resides in the focal adhesion. It localises to the cytoplasm. The protein localises to the cell projection. Its subcellular location is the axon. Docking protein which plays a central coordinating role for tyrosine kinase-based signaling related to cell adhesion. Implicated in induction of cell migration and cell branching. Involved in the BCAR3-mediated inhibition of TGFB signaling. This Mus musculus (Mouse) protein is Breast cancer anti-estrogen resistance protein 1 (Bcar1).